Here is a 374-residue protein sequence, read N- to C-terminus: D-amino-acid oxidase 3 (374 aa).

An N-terminal signal peptide occupies residues 1–19; it reads MVKYDAIILGSGVLGLSIA. Serine 11, leucine 14, lysine 34, aspartate 35, alanine 46, serine 47, and glycine 51 together coordinate FAD. Residue asparagine 180 is glycosylated (N-linked (GlcNAc...) asparagine). The cysteines at positions 214 and 271 are disulfide-linked. The (R)-lactate site is built by tyrosine 229, tyrosine 246, and arginine 296. Residues tyrosine 229, tyrosine 246, and arginine 296 each coordinate anthranilate. The FAD site is built by arginine 296, glycine 342, glycine 345, tyrosine 346, and glutamine 347. Residues 372–374 carry the Microbody targeting signal motif; sequence AKL.

The protein belongs to the DAMOX/DASOX family. The cofactor is FAD.

The protein resides in the peroxisome matrix. The catalysed reaction is a D-alpha-amino acid + O2 + H2O = a 2-oxocarboxylate + H2O2 + NH4(+). Catalyzes the oxidative deamination of D-amino acids with broad substrate specificity. Enables the organism to utilize D-amino acids as a source of nutrients. Enables the organism to utilize D-asparate and D-glutamate as a nitrogen source and may also contribute to utlization of D-tryptophan, D-tyrosine and D-asparagine as a nitrogen source. Protects the organism from the toxicity of D-amino acids, including from D-glutamate. May play a role in its interaction with the host. The protein is D-amino-acid oxidase 3 of Cryptococcus deuterogattii (strain R265) (Cryptococcus gattii VGII (strain R265)).